Here is a 458-residue protein sequence, read N- to C-terminus: tRNA-2-methylthio-N(6)-dimethylallyladenosine synthase (458 aa).

The region spanning 3–120 (QKLYIETFGC…LPSMLEQVRC (118 aa)) is the MTTase N-terminal domain. Positions 12, 49, 83, 157, 161, and 164 each coordinate [4Fe-4S] cluster. The Radical SAM core domain occupies 143-375 (RADGPKAFVS…QAKIADNAAK (233 aa)). The region spanning 378–441 (ASMVGSIQSV…PNSLRGRLIG (64 aa)) is the TRAM domain.

This sequence belongs to the methylthiotransferase family. MiaB subfamily. As to quaternary structure, monomer. [4Fe-4S] cluster serves as cofactor.

The protein resides in the cytoplasm. The catalysed reaction is N(6)-dimethylallyladenosine(37) in tRNA + (sulfur carrier)-SH + AH2 + 2 S-adenosyl-L-methionine = 2-methylsulfanyl-N(6)-dimethylallyladenosine(37) in tRNA + (sulfur carrier)-H + 5'-deoxyadenosine + L-methionine + A + S-adenosyl-L-homocysteine + 2 H(+). Catalyzes the methylthiolation of N6-(dimethylallyl)adenosine (i(6)A), leading to the formation of 2-methylthio-N6-(dimethylallyl)adenosine (ms(2)i(6)A) at position 37 in tRNAs that read codons beginning with uridine. This is tRNA-2-methylthio-N(6)-dimethylallyladenosine synthase from Methylococcus capsulatus (strain ATCC 33009 / NCIMB 11132 / Bath).